The following is a 197-amino-acid chain: MATLLRIDSSASGENSKSRQLANEFVEKWLAKNPEGKVVARDVTANPLPHFTGETLGALFTPEENRTAEQQAIVAIGDELIAELEAADLVIVSAPMYNFGIPSTLKSYFDHVARAGRTFKYTETGPVGLVNKDAYIFAASGSFLAGAPVDHQVPHIQTFLGFIGLNVKDTFIAGGQAMGEPGEDAFNQAKSQIAVAV.

Residues Ser-10, 16 to 18 (SKS), and 96 to 99 (MYNF) contribute to the FMN site.

The protein belongs to the azoreductase type 1 family. Homodimer. FMN serves as cofactor.

The catalysed reaction is 2 a quinone + NADH + H(+) = 2 a 1,4-benzosemiquinone + NAD(+). It carries out the reaction N,N-dimethyl-1,4-phenylenediamine + anthranilate + 2 NAD(+) = 2-(4-dimethylaminophenyl)diazenylbenzoate + 2 NADH + 2 H(+). Its function is as follows. Quinone reductase that provides resistance to thiol-specific stress caused by electrophilic quinones. In terms of biological role, also exhibits azoreductase activity. Catalyzes the reductive cleavage of the azo bond in aromatic azo compounds to the corresponding amines. In Marinomonas sp. (strain MWYL1), this protein is FMN-dependent NADH:quinone oxidoreductase.